The following is a 283-amino-acid chain: Secretory carrier-associated membrane protein 2 (283 aa).

The tract at residues 1 to 47 is disordered; that stretch reads MARHDPNPFADEEINPFANHTSVPPASNSYLKPLPPEPYDRGATVDI. The Cytoplasmic portion of the chain corresponds to 1–123; the sequence is MARHDPNPFA…LQKIQYVAFT (123 aa). A compositionally biased stretch (polar residues) spans 18 to 30; it reads ANHTSVPPASNSY. Positions 50–87 form a coiled coil; the sequence is DSGNDLRAKEMELQAKENELKRKEQELKRREDAIARTG. Transmembrane regions (helical) follow at residues 124–144, 151–171, 186–206, and 234–254; these read TLLG…VAWI, IWLL…VLWY, FGAF…AAVA, and IMYF…IWVI. Topologically, residues 255-283 are cytoplasmic; the sequence is QQVYAYFRGSGKAAEMKREATKSTLMRAL.

Belongs to the SCAMP family.

Its subcellular location is the cell membrane. It is found in the cytoplasmic vesicle. It localises to the secretory vesicle membrane. In terms of biological role, probably involved in membrane trafficking. This is Secretory carrier-associated membrane protein 2 (SCAMP2) from Arabidopsis thaliana (Mouse-ear cress).